The sequence spans 421 residues: UDP-N-acetylglucosamine 1-carboxyvinyltransferase (421 aa).

22–23 (KN) lines the phosphoenolpyruvate pocket. Arginine 93 contributes to the UDP-N-acetyl-alpha-D-glucosamine binding site. Residue cysteine 117 is the Proton donor of the active site. The residue at position 117 (cysteine 117) is a 2-(S-cysteinyl)pyruvic acid O-phosphothioketal. UDP-N-acetyl-alpha-D-glucosamine-binding positions include 122–126 (RPVDL), aspartate 308, and isoleucine 330.

Belongs to the EPSP synthase family. MurA subfamily.

The protein resides in the cytoplasm. It carries out the reaction phosphoenolpyruvate + UDP-N-acetyl-alpha-D-glucosamine = UDP-N-acetyl-3-O-(1-carboxyvinyl)-alpha-D-glucosamine + phosphate. The protein operates within cell wall biogenesis; peptidoglycan biosynthesis. In terms of biological role, cell wall formation. Adds enolpyruvyl to UDP-N-acetylglucosamine. The polypeptide is UDP-N-acetylglucosamine 1-carboxyvinyltransferase (Pseudomonas entomophila (strain L48)).